The primary structure comprises 203 residues: Ras-related protein Rab-24 (203 aa).

Tyr17 bears the Phosphotyrosine mark. GTP contacts are provided by Gly19, Lys20, Thr21, and Thr40. Mg(2+) is bound by residues Thr21, Thr40, and Asp63. The segment at 30–45 (DRFLVGPYQNTIGAAF) is switch I. The interval 63 to 80 (DTAGSERYEAMSRIYYRG) is switch II. GTP-binding residues include Gly66, Lys121, Asp123, and Lys156. At Tyr172 the chain carries Phosphotyrosine. S-geranylgeranyl cysteine attachment occurs at residues Cys200 and Cys201.

The protein belongs to the small GTPase superfamily. Rab family. In terms of assembly, interacts with ZFYVE20. Does not interact with the GDP dissociation inhibitors ARHGDIA and ARHGDIB. The cofactor is Mg(2+). Post-translationally, prenylated; prenylation is required for RAB24 localization to autophagosomes. Isoprenylation is inefficient compared to other Rab family members. Phosphorylated at Tyr-17 and Tyr-172. Cytosolic pool of RAB24 is more phosphorylated than the membrane-associated pool. As to expression, widely expressed, with highest expression in brain.

It is found in the cytoplasm. The protein localises to the cytosol. Its subcellular location is the membrane. It localises to the cytoplasmic vesicle. The protein resides in the autophagosome membrane. It is found in the perinuclear region. The protein localises to the cytoskeleton. Its subcellular location is the spindle. The enzyme catalyses GTP + H2O = GDP + phosphate + H(+). Its activity is regulated as follows. Regulated by guanine nucleotide exchange factors (GEFs) which promote the exchange of bound GDP for free GTP. Regulated by GTPase activating proteins (GAPs) which increase the GTP hydrolysis activity. Inhibited by GDP dissociation inhibitors (GDIs). Functionally, the small GTPases Rab are key regulators of intracellular membrane trafficking, from the formation of transport vesicles to their fusion with membranes. Rabs cycle between an inactive GDP-bound form and an active GTP-bound form that is able to recruit to membranes different sets of downstream effectors directly responsible for vesicle formation, movement, tethering and fusion. RAB24 is an atypical RAB protein that presents low GTPase activity and thereby exists predominantly in the GTP-bound active state. RAB24 is required for the clearance of late autophagic vacuoles under basal conditions. It is not needed for starvation-induced autophagy. Involved in the modulation of meiotic apparatus assembly and meiotic progression during oocyte maturation, possibly through regulation of kinetochore-microtubule interaction. The protein is Ras-related protein Rab-24 of Mus musculus (Mouse).